We begin with the raw amino-acid sequence, 588 residues long: Calicin (588 aa).

Residues 28 to 98 (WDMALTVDHH…FYSGKVVISE (71 aa)) enclose the BTB domain. In terms of domain architecture, BACK spans 133 to 235 (CLRYLFLAEL…NAVSNKTLMF (103 aa)). Residue serine 149 is modified to Phosphoserine. Kelch repeat units lie at residues 280–327 (SVVI…AAGR), 328–375 (YIYI…TCGG), 377–423 (VYSV…TKGD), 425–475 (NLYI…SFHQ), 476–525 (DNIL…IGDS), and 526–580 (KVFV…LAKL).

Interacts with CYLC1; the interaction may be relevant for proper acrosome attachment to the nuclear envelope. In terms of tissue distribution, expressed in testis and in spermatozoa.

Its subcellular location is the cytoplasm. It is found in the cytoskeleton. It localises to the perinuclear theca. The protein resides in the calyx. In terms of biological role, required for both nuclear and acrosomal shaping during spermiogenesis. This is Calicin (Ccin) from Mus musculus (Mouse).